A 464-amino-acid polypeptide reads, in one-letter code: Uronate isomerase (464 aa).

Belongs to the metallo-dependent hydrolases superfamily. Uronate isomerase family.

The catalysed reaction is D-glucuronate = D-fructuronate. It carries out the reaction aldehydo-D-galacturonate = keto-D-tagaturonate. It participates in carbohydrate metabolism; pentose and glucuronate interconversion. This chain is Uronate isomerase, found in Caldicellulosiruptor bescii (strain ATCC BAA-1888 / DSM 6725 / KCTC 15123 / Z-1320) (Anaerocellum thermophilum).